We begin with the raw amino-acid sequence, 202 residues long: Dephospho-CoA kinase (202 aa).

The 199-residue stretch at 4 to 202 (VIGLTGGIAT…TDKGFINKER (199 aa)) folds into the DPCK domain. 12–17 (ATGKST) contacts ATP.

This sequence belongs to the CoaE family.

The protein localises to the cytoplasm. The enzyme catalyses 3'-dephospho-CoA + ATP = ADP + CoA + H(+). The protein operates within cofactor biosynthesis; coenzyme A biosynthesis; CoA from (R)-pantothenate: step 5/5. Its function is as follows. Catalyzes the phosphorylation of the 3'-hydroxyl group of dephosphocoenzyme A to form coenzyme A. In Staphylococcus haemolyticus (strain JCSC1435), this protein is Dephospho-CoA kinase.